We begin with the raw amino-acid sequence, 64 residues long: Large ribosomal subunit protein bL35 (64 aa).

Residues 1-26 (MPKMKTKSAAAKRFKTTKSGKIKRKQ) show a composition bias toward basic residues. Residues 1-46 (MPKMKTKSAAAKRFKTTKSGKIKRKQAYTSHLAPNKTTKQKRHLRK) form a disordered region.

Belongs to the bacterial ribosomal protein bL35 family.

The protein is Large ribosomal subunit protein bL35 of Mycoplasmoides gallisepticum (strain R(low / passage 15 / clone 2)) (Mycoplasma gallisepticum).